A 241-amino-acid polypeptide reads, in one-letter code: 2,3-bisphosphoglycerate-dependent phosphoglycerate mutase (241 aa).

Residue His-12 is the Tele-phosphohistidine intermediate of the active site. Substrate is bound by residues Ser-24–Gly-25, Arg-61, Glu-117–Tyr-120, and Lys-128. Glu-117 acts as the Proton donor/acceptor in catalysis.

It belongs to the phosphoglycerate mutase family. BPG-dependent PGAM subfamily.

The catalysed reaction is (2R)-2-phosphoglycerate = (2R)-3-phosphoglycerate. Its pathway is carbohydrate degradation; glycolysis; pyruvate from D-glyceraldehyde 3-phosphate: step 3/5. Its function is as follows. Catalyzes the interconversion of 2-phosphoglycerate and 3-phosphoglycerate. In Methanosarcina mazei (strain ATCC BAA-159 / DSM 3647 / Goe1 / Go1 / JCM 11833 / OCM 88) (Methanosarcina frisia), this protein is 2,3-bisphosphoglycerate-dependent phosphoglycerate mutase.